Here is a 219-residue protein sequence, read N- to C-terminus: NAD(P)H-quinone oxidoreductase subunit K 2 (219 aa).

4 residues coordinate [4Fe-4S] cluster: cysteine 53, cysteine 54, cysteine 118, and cysteine 149.

The protein belongs to the complex I 20 kDa subunit family. As to quaternary structure, NDH-1 can be composed of about 15 different subunits; different subcomplexes with different compositions have been identified which probably have different functions. Requires [4Fe-4S] cluster as cofactor.

Its subcellular location is the cellular thylakoid membrane. The catalysed reaction is a plastoquinone + NADH + (n+1) H(+)(in) = a plastoquinol + NAD(+) + n H(+)(out). The enzyme catalyses a plastoquinone + NADPH + (n+1) H(+)(in) = a plastoquinol + NADP(+) + n H(+)(out). NDH-1 shuttles electrons from an unknown electron donor, via FMN and iron-sulfur (Fe-S) centers, to quinones in the respiratory and/or the photosynthetic chain. The immediate electron acceptor for the enzyme in this species is believed to be plastoquinone. Couples the redox reaction to proton translocation, and thus conserves the redox energy in a proton gradient. Cyanobacterial NDH-1 also plays a role in inorganic carbon-concentration. This chain is NAD(P)H-quinone oxidoreductase subunit K 2, found in Synechocystis sp. (strain ATCC 27184 / PCC 6803 / Kazusa).